Consider the following 1187-residue polypeptide: Roquin-2 (1187 aa).

Positions 14, 17, 33, 35, 38, 50, and 53 each coordinate Zn(2+). The RING-type; degenerate zinc-finger motif lies at 14–54 (CPICYNEFDENVHKPISLGCSHTVCKTCLNKLHRKACPFDQ). The segment at 91 to 170 (ENKHYEVAKK…RTVTELILQH (80 aa)) is HEPN-N. The interval 171–325 (QNPQQLSANL…SIIDKLQSPE (155 aa)) is ROQ. Positions 326–396 (SFAKSVQELT…GLVDFIQNYS (71 aa)) are HEPN-C. The C3H1-type zinc finger occupies 410-438 (KYKTSMCRDLRQQGGCPRGTNCTFAHSQE). Disordered regions lie at residues 527–571 (VGTN…GTEL) and 640–677 (NVPE…PPPQ). A compositionally biased stretch (polar residues) spans 529-545 (TNAQNAGPSAESVSENK). The residue at position 548 (S548) is a Phosphoserine. Residues 553–571 (PVSNAAATSAGPSNFGTEL) are compositionally biased toward polar residues. Residues S806, S981, and S1115 each carry the phosphoserine modification.

In terms of assembly, interacts with EDC4. Interacts with CCR4-NOT deadenylase complex. Interacts with MAP3K5; the interaction is probably stimulus-dependent. In terms of processing, proteolytically cleaved by MALT1 in activated CD4(+) T cells; cleavage at Arg-509 is critical for promoting RC3H1 degradation in response to T-cell receptor (TCR) stimulation, and hence is necessary for prolonging the stability of a set of mRNAs controlling Th17 cell differentiation. As to expression, highest levels in lymph node and thymus and slightly lesser amounts in brain, lung, and spleen (at protein level). Very weak expression in heart, muscle, and kidney (at protein level). Expressed in CD4(+) helper T-cells (at protein level).

Its subcellular location is the cytoplasm. It localises to the P-body. The catalysed reaction is S-ubiquitinyl-[E2 ubiquitin-conjugating enzyme]-L-cysteine + [acceptor protein]-L-lysine = [E2 ubiquitin-conjugating enzyme]-L-cysteine + N(6)-ubiquitinyl-[acceptor protein]-L-lysine.. The protein operates within protein modification; protein ubiquitination. Its activity is regulated as follows. Binding to dsRNA, but not CDE RNA, crosstalks with the E3 ubiquitin ligase activity and may inhibit ubiquitination. Its function is as follows. Post-transcriptional repressor of mRNAs containing a conserved stem loop motif, called constitutive decay element (CDE), which is often located in the 3'-UTR, as in HMGXB3, ICOS, IER3, NFKBID, NFKBIZ, PPP1R10, TNF and in many more mRNAs. Binds to CDE and promotes mRNA deadenylation and degradation. This process does not involve miRNAs. In follicular helper T (Tfh) cells, represses of ICOS and TNFRSF4 expression, thus preventing spontaneous Tfh cell differentiation, germinal center B-cell differentiation in the absence of immunization and autoimmunity. In resting or LPS-stimulated macrophages, controls inflammation by suppressing TNF expression. Also recognizes CDE in its own mRNA and in that of paralogous RC3H1, possibly leading to feedback loop regulation. Inhibits cooperatively with ZC3H12A the differentiation of helper T cells Th17 in lungs. They repress target mRNA encoding the Th17 cell-promoting factors IL6, ICOS, REL, IRF4, NFKBID and NFKBIZ. The cooperation requires RNA-binding by RC3H1 and the nuclease activity of ZC3H12A. miRNA-binding protein that regulates microRNA homeostasis. Enhances DICER-mediated processing of pre-MIR146a but reduces mature MIR146a levels through an increase of 3' end uridylation. Both inhibits ICOS mRNA expression and they may act together to exert the suppression. Acts as a ubiquitin E3 ligase. Pairs with E2 enzymes UBE2B, UBE2D2, UBE2E2, UBE2E3, UBE2G2, UBE2K and UBE2Q2 and produces polyubiquitin chains. Shows the strongest activity when paired with UBE2N:UBE2V1 or UBE2N:UBE2V2 E2 complexes and generate both short and long polyubiquitin chains. Involved in the ubiquitination of MAP3K5. Able to interact with double-stranded RNA (dsRNA). In Mus musculus (Mouse), this protein is Roquin-2 (Rc3h2).